Consider the following 160-residue polypeptide: Competence protein ComGD (160 aa).

A helical transmembrane segment spans residues 30 to 50 (AFTMLESLLVLGLVSILALGL).

In terms of assembly, the transformation pili are flexible filaments, consisting mainly of the major pilin ComGC and smaller amounts of the minor pilins, including at least ComGD, ComGF and ComGG, and perhaps ComGE. Interacts with ComGE. Interacts with ComGF. Interacts with ComGG.

The protein localises to the cell membrane. It is found in the cell surface. The protein resides in the fimbrium. Its function is as follows. Required for formation of the type IV-like pilus (T4P) that plays a role in transformation. Transformation pili are dynamically extended and retracted, perhaps thereby promoting DNA uptake and transformation. Involved in transformation. Required for DNA binding. The protein is Competence protein ComGD of Streptococcus pneumoniae (strain ATCC BAA-255 / R6).